A 202-amino-acid chain; its full sequence is Chromophore lyase CpcT/CpeT 2 (202 aa).

Belongs to the CpcT/CpeT biliprotein lyase family.

Functionally, covalently attaches a chromophore to Cys residue(s) of phycobiliproteins. The polypeptide is Chromophore lyase CpcT/CpeT 2 (Gloeobacter violaceus (strain ATCC 29082 / PCC 7421)).